The primary structure comprises 381 residues: Dual-specificity RNA methyltransferase RlmN (381 aa).

The active-site Proton acceptor is the Glu-96. Residues 102–342 form the Radical SAM core domain; it reads TDDRGTLCVS…TRTTRGDDID (241 aa). Residues Cys-109 and Cys-345 are joined by a disulfide bond. [4Fe-4S] cluster contacts are provided by Cys-116, Cys-120, and Cys-123. Residues 170–171, Ser-202, 224–226, and Asn-302 contribute to the S-adenosyl-L-methionine site; these read GE and SLH. The active-site S-methylcysteine intermediate is the Cys-345.

This sequence belongs to the radical SAM superfamily. RlmN family. Requires [4Fe-4S] cluster as cofactor.

Its subcellular location is the cytoplasm. It carries out the reaction adenosine(2503) in 23S rRNA + 2 reduced [2Fe-2S]-[ferredoxin] + 2 S-adenosyl-L-methionine = 2-methyladenosine(2503) in 23S rRNA + 5'-deoxyadenosine + L-methionine + 2 oxidized [2Fe-2S]-[ferredoxin] + S-adenosyl-L-homocysteine. The catalysed reaction is adenosine(37) in tRNA + 2 reduced [2Fe-2S]-[ferredoxin] + 2 S-adenosyl-L-methionine = 2-methyladenosine(37) in tRNA + 5'-deoxyadenosine + L-methionine + 2 oxidized [2Fe-2S]-[ferredoxin] + S-adenosyl-L-homocysteine. Specifically methylates position 2 of adenine 2503 in 23S rRNA and position 2 of adenine 37 in tRNAs. m2A2503 modification seems to play a crucial role in the proofreading step occurring at the peptidyl transferase center and thus would serve to optimize ribosomal fidelity. The protein is Dual-specificity RNA methyltransferase RlmN of Pseudomonas putida (strain GB-1).